The primary structure comprises 940 residues: Antiviral innate immune response receptor RIG-I (940 aa).

CARD domains follow at residues 1-87 (MTAE…GLCE) and 92-172 (WDFQ…KTLK). Glycyl lysine isopeptide (Lys-Gly) (interchain with G-Cter in ubiquitin) cross-links involve residues lysine 48, lysine 96, lysine 154, lysine 164, lysine 172, and lysine 190. The segment at 219–928 (ENQNLSQNSC…LSFDAAEMAG (710 aa)) is interaction with ZC3HAV1. A Helicase ATP-binding domain is found at 249–428 (ALPAQNGKNT…AEATEYICKL (180 aa)). ATP is bound at residue 262 to 269 (APTGCGKT). The short motif at 370–373 (DECH) is the DECH box element. The region spanning 613-779 (KLRDLCFILQ…ILQTWDEAVF (167 aa)) is the Helicase C-terminal domain. Residues 738–928 (GSKCFLLTAN…LSFDAAEMAG (191 aa)) are mediates interaction with RNF135. Phosphothreonine; by CK2 is present on threonine 773. Residues 795-928 (DNQGKPEPVP…LSFDAAEMAG (134 aa)) form the RLR CTR domain. Zn(2+) is bound at residue cysteine 813. Residue lysine 815 forms a Glycyl lysine isopeptide (Lys-Gly) (interchain with G-Cter in ubiquitin) linkage. Cysteine 816 contributes to the Zn(2+) binding site. An N6-acetyllysine modification is found at lysine 861. Zn(2+) contacts are provided by cysteine 867 and cysteine 872. Residue lysine 912 is modified to N6-acetyllysine.

This sequence belongs to the helicase family. RLR subfamily. Monomer; maintained as a monomer in an autoinhibited state. Upon binding of viral RNAs and conformational shift, homooligomerizes and forms filaments on these molecules. Interacts (via tandem CARD domain) with MAVS/IPS1 promoting its filamentation. Interacts with DHX58/LGP2, IKBKE, TBK1 and STING1. Interacts (via CARD domain) with TRIM25 (via SPRY domain). Interacts (double-stranded RNA-bound oligomeric form) with RNF135 (homodimer); involved in RNA length-dependent activation of the RIG-I signaling pathway. Interacts with CYLD. Interacts with NLRC5; blocks the interaction of MAVS/IPS1 to RIGI. Interacts with SRC. Interacts with DDX60. Interacts with ZC3HAV1 (via zinc-fingers) in an RNA-dependent manner. Interacts (via tandem CARD domain) with SEC14L1; the interaction is direct and impairs the interaction of RIGI with MAVS/IPS1. Interacts with VCP/p97; interaction is direct and allows the recruitment of RNF125 and subsequent ubiquitination and degradation. Interacts with NOP53; may regulate RIGI through USP15-mediated 'Lys-63'-linked deubiquitination. Interacts with SIGLEC10, CBL and PTPN11; within a negative feedback loop leading to RIGI degradation. Interacts with LRRC25. Interacts with ZCCHC3; leading to activation of RIGI. Interacts with RNF123. Interacts with UBE2D3 and UBE2N; E2 ubiquitin ligases involved in RNF135-mediated ubiquitination of RIGI and activation of the RIG-I signaling pathway. Interacts with IFIT3. Interacts with DDX3X. Interacts with RTN3. Interacts with ARL16; this interaction is GTP-dependent and induced upon viral infection; this interaction suppresses the RNA sensing activity of RIGI. Interacts with DHX16; this interaction enhances RIGI-mediated antiviral response. Interacts with IRGM; promoting RIGI degradation. Interacts with IFI6; this interaction inhibits RIGI activation. Interacts with ECSIT; this interaction bridges RIGI to the MAVS complex at the mitochondrion. Interacts with YWHAE; this interaction drives RIGI at the mitochondrion. Phosphorylated in resting cells and dephosphorylated in RNA virus-infected cells. Phosphorylation at Thr-773 results in inhibition of its activity while dephosphorylation at these sites results in its activation. In terms of processing, ISGylated. Conjugated to ubiquitin-like protein ISG15 upon IFN-beta stimulation. ISGylation negatively regulates its function in antiviral signaling response. Post-translationally, sumoylated, probably by MUL1; inhibiting its polyubiquitination. Acetylated in response to RNA virus infection. Deacetylated by HDAC6 in the presence of viral mRNAs which is required for detection of viral RNA by RIGI. In terms of processing, ubiquitinated. 'Lys-63' ubiquitination by RNF135, which occurs after RNA-binding and homodimerization, releases the autoinhibition of the CARD domains by the RLR CTR domain, an essential step in the activation of the RIG-I signaling pathway. Also ubiquitinated by TRIM4. Also undergoes 'Lys-48' ubiquitination by RNF125 that leads to proteasomal degradation. 'Lys-48' ubiquitination follows viral infection and is enhanced by 'Lys-63'-linked ubiquitination of the CARD domains that promotes interaction with VCP/p97 and subsequent recruitment of RNF125. Within a negative feedback loop involving SIGLEC10 and PTPN11, 'Lys-48' ubiquitination at Lys-815 by CBL also elicits the proteasomal degradation of RIGI. Deubiquitinated by CYLD, a protease that selectively cleaves 'Lys-63'-linked ubiquitin chains. Also probably deubiquitinated by USP17L2/USP17 that cleaves 'Lys-48'- and 'Lys-63'-linked ubiquitin chains and positively regulates the receptor. Ubiquitinated by TRIM40 via 'Lys-48'-linked ubiquitination; leading to proteasomal degradation. Deubiquitinated by USP27X that cleaves 'Lys-63'-linked ubiquitin chains and inhibits the innate immune receptor activity. Deubiquitinated by USP3 that also cleaves 'Lys-63'-linked ubiquitin chains and inhibits the innate immune receptor activity. Post-translationally, degraded via selective autophagy following interaction with IRGM. IRGM promotes RIGI recruitment to autophagosome membranes, promoting its SQSTM1/p62-dependent autophagic degradation. In terms of tissue distribution, ubiquitously expressed, with highest levels in spleen, liver, intestine and heart. Up-regulated in tracheobronchial lymph node and tonsils during porcine reproductive and respiratory syndrome virus (PRRSV) infection.

The protein resides in the cytoplasm. Its subcellular location is the cell projection. It is found in the ruffle membrane. The protein localises to the cytoskeleton. It localises to the cell junction. The protein resides in the tight junction. It carries out the reaction ATP + H2O = ADP + phosphate + H(+). In terms of biological role, innate immune receptor that senses cytoplasmic viral nucleic acids and activates a downstream signaling cascade leading to the production of type I interferons and pro-inflammatory cytokines. Forms a ribonucleoprotein complex with viral RNAs on which it homooligomerizes to form filaments. The homooligomerization allows the recruitment of RNF135 an E3 ubiquitin-protein ligase that activates and amplifies the RIG-I-mediated antiviral signaling in an RNA length-dependent manner through ubiquitination-dependent and -independent mechanisms. Upon activation, associates with mitochondria antiviral signaling protein (MAVS/IPS1) that activates the IKK-related kinases TBK1 and IKBKE which in turn phosphorylate the interferon regulatory factors IRF3 and IRF7, activating transcription of antiviral immunological genes including the IFN-alpha and IFN-beta interferons. Ligands include: 5'-triphosphorylated ssRNA and dsRNA and short dsRNA (&lt;1 kb in length). In addition to the 5'-triphosphate moiety, blunt-end base pairing at the 5'-end of the RNA is very essential. Overhangs at the non-triphosphorylated end of the dsRNA RNA have no major impact on its activity. A 3'overhang at the 5'triphosphate end decreases and any 5'overhang at the 5' triphosphate end abolishes its activity. Detects both positive and negative strand RNA viruses including members of the families Paramyxoviridae, Rhabdoviridae: vesicular stomatitis virus (VSV) Orthomyxoviridae: influenza A and B virus, Flaviviridae: Japanese encephalitis virus (JEV). It also detects rotavirus and reovirus. Also involved in antiviral signaling in response to viruses containing a dsDNA genome. Detects dsRNA produced from non-self dsDNA by RNA polymerase III. May play important roles in granulocyte production and differentiation, bacterial phagocytosis and in the regulation of cell migration. The sequence is that of Antiviral innate immune response receptor RIG-I from Sus scrofa (Pig).